The primary structure comprises 108 residues: uncharacterized protein (108 aa).

The N-terminal stretch at 1 to 21 is a signal peptide; sequence MFRSLFLAAALMAFTPLAANA.

This sequence to E.coli YaaX.

This is an uncharacterized protein from Escherichia coli O157:H7.